The following is a 30-amino-acid chain: Cycloviolacin-O9 (30 aa).

Positions 1 to 30 (GIPCGESCVWIPCLTSAVGCSCKSKVCYRN) form a cross-link, cyclopeptide (Gly-Asn). Disulfide bonds link C4-C20, C8-C22, and C13-C27.

Post-translationally, this is a cyclic peptide.

Its function is as follows. Probably participates in a plant defense mechanism. The chain is Cycloviolacin-O9 from Viola odorata (Sweet violet).